A 386-amino-acid chain; its full sequence is Adiponectin receptor protein 2 (386 aa).

The segment at 1–72 (MNEPAKHRLG…ECHDDNSQED (72 aa)) is disordered. The Cytoplasmic segment spans residues 1–147 (MNEPAKHRLG…SIFRIHTETG (147 aa)). A compositionally biased stretch (basic and acidic residues) spans 15–31 (PEPDIRLRKGHQLDDTR). Acidic residues predominate over residues 58 to 72 (SPEEPECHDDNSQED). The chain crosses the membrane as a helical span at residues 148 to 168 (NIWTHLLGCVFFLCLGIFYMF). The Extracellular portion of the chain corresponds to 169–181 (RPNISFVAPLQEK). The helical transmembrane segment at 182–202 (VVFGLFFLGAILCLSFSWLFH) threads the bilayer. Histidine 202 is a binding site for Zn(2+). The Cytoplasmic segment spans residues 203–213 (TVYCHSEGVSR). The chain crosses the membrane as a helical span at residues 214–234 (LFSKLDYSGIALLIMGSFVPW). Over 235 to 245 (LYYSFYCNPQP) the chain is Extracellular. The helical transmembrane segment at 246-266 (CFIYLIVICVLGIAAIIVSQW) threads the bilayer. The Cytoplasmic segment spans residues 267–273 (DMFATPQ). The chain crosses the membrane as a helical span at residues 274 to 294 (YRGVRAGVFVGLGLSGIIPTL). Topologically, residues 295–309 (HYVISEGFLKAATIG) are extracellular. A helical transmembrane segment spans residues 310–330 (QIGWLMLMASLYITGAALYAA). Residues 331–348 (RIPERFFPGKCDIWFHSH) lie on the Cytoplasmic side of the membrane. Residues histidine 348 and histidine 352 each coordinate Zn(2+). A helical transmembrane segment spans residues 349 to 369 (QLFHIFVVAGAFVHFHGVSNL). At 370-386 (QEFRFMIGGGCTEEDAL) the chain is on the extracellular side.

Belongs to the ADIPOR family. In terms of assembly, may form homooligomers and heterooligomers with ADIPOR1. Interacts with APPL2 (via BAR domain); ADIPOQ dissociates this interaction. Detected in liver and quadriceps muscle (at protein level). Highly expressed in liver. Highly expressed in white adipose tissue, and at intermediate levels in brown adipose tissue. Expressed at intermediate level in heart, kidney, lung and skeletal muscle. Weakly expressed in brain, spleen and testis.

It is found in the cell membrane. Its function is as follows. Receptor for ADIPOQ, an essential hormone secreted by adipocytes that regulates glucose and lipid metabolism. Required for normal body fat and glucose homeostasis. ADIPOQ-binding activates a signaling cascade that leads to increased PPARA activity, and ultimately to increased fatty acid oxidation and glucose uptake. Has intermediate affinity for globular and full-length adiponectin. Required for normal revascularization after chronic ischemia caused by severing of blood vessels. The polypeptide is Adiponectin receptor protein 2 (Mus musculus (Mouse)).